Consider the following 131-residue polypeptide: Translation initiation factor 5A (131 aa).

Hypusine is present on K37.

This sequence belongs to the eIF-5A family.

Its subcellular location is the cytoplasm. Its function is as follows. Functions by promoting the formation of the first peptide bond. The sequence is that of Translation initiation factor 5A (eIF5A) from Methanococcus vannielii (strain ATCC 35089 / DSM 1224 / JCM 13029 / OCM 148 / SB).